A 435-amino-acid polypeptide reads, in one-letter code: Kynurenine--oxoglutarate transaminase (435 aa).

Substrate contacts are provided by G46 and N198. At K262 the chain carries N6-(pyridoxal phosphate)lysine. R413 is a binding site for substrate.

This sequence belongs to the class-I pyridoxal-phosphate-dependent aminotransferase family. Homodimer. It depends on pyridoxal 5'-phosphate as a cofactor.

It localises to the cytoplasm. It carries out the reaction L-kynurenine + 2-oxoglutarate = kynurenate + L-glutamate + H2O. The catalysed reaction is 3-phenylpyruvate + L-glutamine = 2-oxoglutaramate + L-phenylalanine. The enzyme catalyses an S-substituted L-cysteine + H2O = a thiol + pyruvate + NH4(+). The protein operates within amino-acid degradation; L-kynurenine degradation; kynurenate from L-kynurenine: step 1/2. Its function is as follows. Catalyzes the irreversible transamination of the L-tryptophan metabolite L-kynurenine to form kynurenic acid (KA). Metabolizes the cysteine conjugates of certain halogenated alkenes and alkanes to form reactive metabolites. Catalyzes the beta-elimination of S-conjugates and Se-conjugates of L-(seleno)cysteine, resulting in the cleavage of the C-S or C-Se bond. The sequence is that of Kynurenine--oxoglutarate transaminase (ccbl) from Dictyostelium discoideum (Social amoeba).